The primary structure comprises 829 residues: Cadherin-3 (829 aa).

An N-terminal signal peptide occupies residues Met1–Ser24. Positions Glu25 to Arg107 are excised as a propeptide. Cadherin domains lie at Asp108–Phe215, Thr216–Phe328, Asp329–Phe440, Val441–Pro546, and Val547–Pro650. The Extracellular segment spans residues Asp108–Gly654. An N-linked (GlcNAc...) asparagine glycan is attached at Asn200. Asn566 carries an N-linked (GlcNAc...) asparagine glycan. Residues Phe655–Val677 form a helical membrane-spanning segment. Topologically, residues Arg678–Asp829 are cytoplasmic.

As to quaternary structure, interacts with CDCP1 and CTNNB1. In terms of tissue distribution, expressed in some normal epithelial tissues and in some carcinoma cell lines.

It is found in the cell membrane. Functionally, cadherins are calcium-dependent cell adhesion proteins. They preferentially interact with themselves in a homophilic manner in connecting cells; cadherins may thus contribute to the sorting of heterogeneous cell types. This Homo sapiens (Human) protein is Cadherin-3 (CDH3).